The following is a 382-amino-acid chain: tRNA-specific 2-thiouridylase MnmA (382 aa).

ATP is bound by residues 34–41 (AMSGGVDS) and Leu-60. The active-site Nucleophile is the Cys-128. A disulfide bond links Cys-128 and Cys-224. Gly-152 provides a ligand contact to ATP. Residues 174–176 (RDQ) are interaction with tRNA. Cys-224 serves as the catalytic Cysteine persulfide intermediate.

This sequence belongs to the MnmA/TRMU family.

The protein resides in the cytoplasm. It carries out the reaction S-sulfanyl-L-cysteinyl-[protein] + uridine(34) in tRNA + AH2 + ATP = 2-thiouridine(34) in tRNA + L-cysteinyl-[protein] + A + AMP + diphosphate + H(+). Catalyzes the 2-thiolation of uridine at the wobble position (U34) of tRNA, leading to the formation of s(2)U34. The protein is tRNA-specific 2-thiouridylase MnmA of Sphingopyxis alaskensis (strain DSM 13593 / LMG 18877 / RB2256) (Sphingomonas alaskensis).